The primary structure comprises 642 residues: MPVITLPDGSKREFAQPVSTLDVAADIGPGLAKACIAGRVNGELKDACDIIDTDSELSIITAKDEEGVEILRHSCAHLLGHAFKQLWPEAKMAIGPVIDNGFYYDIDLDHKLTQEDIDALQKRMTQLAKTNYAVDKRVVSWQEARDTFEARGESYKIEILDENISKDATPALYHHEEYVDMCRGPHVPNMKFCQNFKLMSVAGAYWRGNSDNKMLQRIYGTAWADKKALKVHLNRLEEAAKRDHRKIGKQLDLYHMQEEAPGMVFWHNDGWSLFLELEKFIRQKLGQYTYQEVKGPLMMDRVLWERSGHWDKYADGMFTTNSESREYAIKPMNCPGHVQIFNQGLKSYRDLPLRMAEFGCCHRNEPSGSLHGLMRVRGFTQDDAHVFCTEEQVQQEVSACIQMVYDTYETFGFKNIVVKLSTRPEKRIGDDDMWDRAEEALKQALKSNDIEFEILPGEGAFYGPKIEFTLHDCLDRAWQCGTVQLDYALPGRLGATYVAEDNSRQTPVMIHRAILGSLERFLGILIEEYAGKFPTWLAPQQVVVMNITDKQSDYAEEVVNLFKEHGIRATKDLRNEKIGFKIREHTLRRVPYLLVVGDQEMENKEVAVRTREGVDLGKMQIQEFATKLKNQISLRSLNLLED.

The TGS domain maps to 1–61 (MPVITLPDGS…DTDSELSIIT (61 aa)). The segment at 243 to 534 (DHRKIGKQLD…LIEEYAGKFP (292 aa)) is catalytic. Cys334, His385, and His511 together coordinate Zn(2+).

The protein belongs to the class-II aminoacyl-tRNA synthetase family. Homodimer. The cofactor is Zn(2+).

Its subcellular location is the cytoplasm. It carries out the reaction tRNA(Thr) + L-threonine + ATP = L-threonyl-tRNA(Thr) + AMP + diphosphate + H(+). Catalyzes the attachment of threonine to tRNA(Thr) in a two-step reaction: L-threonine is first activated by ATP to form Thr-AMP and then transferred to the acceptor end of tRNA(Thr). Also edits incorrectly charged L-seryl-tRNA(Thr). The sequence is that of Threonine--tRNA ligase from Shewanella piezotolerans (strain WP3 / JCM 13877).